Consider the following 423-residue polypeptide: MKKSKRKNAQAQEAQETEVLVQEEAEELPEFPEGEPDPDLEDPDLALEDDLLDLPEEGEGLDLEEEEEDLPIPKISTSDPVRQYLHEIGQVPLLTLEEEVELARKVEEGMEAIKKLSEITGLDPDLIREVVRAKILGSARVRHIPGLKETLDPKTVEEIDQKLKSLPKEHKRYLHIAREGEAARQHLIEANLRLVVSIAKKYTGRGLSFLDLIQEGNQGLIRAVEKFEYKRRFKFSTYATWWIRQAINRAIADQARTIRIPVHMVETINKLSRTARQLQQELGREPTYEEIAEAMGPGWDAKRVEETLKIAQEPVSLETPIGDEKDSFYGDFIPDEHLPSPVDAATQSLLSEELEKALSKLSEREAMVLKLRKGLIDGREHTLEEVGAFFGVTRERIRQIENKALRKLKYHESRTRKLRDFLD.

The segment at 1-76 (MKKSKRKNAQ…EEDLPIPKIS (76 aa)) is disordered. The span at 21–70 (VQEEAEELPEFPEGEPDPDLEDPDLALEDDLLDLPEEGEGLDLEEEEEDL) shows a compositional bias: acidic residues. The tract at residues 78-113 (SDPVRQYLHEIGQVPLLTLEEEVELARKVEEGMEAI) is sigma-70 factor domain-1. A sigma-70 factor domain-2 region spans residues 187–257 (LIEANLRLVV…NRAIADQART (71 aa)). An Interaction with polymerase core subunit RpoC motif is present at residues 211 to 214 (DLIQ). Positions 266-344 (ETINKLSRTA…DEHLPSPVDA (79 aa)) are sigma-70 factor domain-3. The tract at residues 357 to 409 (ALSKLSEREAMVLKLRKGLIDGREHTLEEVGAFFGVTRERIRQIENKALRKLK) is sigma-70 factor domain-4. Residues 383–402 (LEEVGAFFGVTRERIRQIEN) constitute a DNA-binding region (H-T-H motif).

This sequence belongs to the sigma-70 factor family. RpoD/SigA subfamily. In terms of assembly, interacts transiently with the RNA polymerase catalytic core formed by RpoA, RpoB, RpoC and RpoZ (2 alpha, 1 beta, 1 beta' and 1 omega subunit) to form the RNA polymerase holoenzyme that can initiate transcription.

It localises to the cytoplasm. Sigma factors are initiation factors that promote the attachment of RNA polymerase to specific initiation sites and are then released. This sigma factor is the primary sigma factor during exponential growth. The chain is RNA polymerase sigma factor SigA from Thermus thermophilus (strain ATCC BAA-163 / DSM 7039 / HB27).